Here is a 374-residue protein sequence, read N- to C-terminus: tRNA-specific 2-thiouridylase MnmA (374 aa).

ATP is bound by residues 17-24 (GMSGGVDS) and Met-43. An interaction with target base in tRNA region spans residues 103–105 (NPD). Cys-108 acts as the Nucleophile in catalysis. Residues Cys-108 and Cys-204 are joined by a disulfide bond. Gly-132 is an ATP binding site. The interval 154–156 (KDQ) is interaction with tRNA. Cys-204 acts as the Cysteine persulfide intermediate in catalysis. The interval 316–317 (RY) is interaction with tRNA.

The protein belongs to the MnmA/TRMU family.

The protein resides in the cytoplasm. The catalysed reaction is S-sulfanyl-L-cysteinyl-[protein] + uridine(34) in tRNA + AH2 + ATP = 2-thiouridine(34) in tRNA + L-cysteinyl-[protein] + A + AMP + diphosphate + H(+). Functionally, catalyzes the 2-thiolation of uridine at the wobble position (U34) of tRNA, leading to the formation of s(2)U34. The protein is tRNA-specific 2-thiouridylase MnmA of Pseudomonas fluorescens (strain Pf0-1).